The following is a 374-amino-acid chain: Fatty acid conjugase FAC2 A (374 aa).

Transmembrane regions (helical) follow at residues Ile50–Phe70 and Ile74–Gly94. The short motif at His95–His99 is the Histidine box-1 element. Positions His131 to His135 match the Histidine box-2 motif. The next 3 membrane-spanning stretches (helical) occupy residues Met168 to Phe188, Val219 to Val239, and Phe246 to Leu266. Residues His306–His310 carry the Histidine box-3 motif.

The protein belongs to the fatty acid desaturase type 1 family. Expressed exclusively in the developing seeds. Not detected in leaves or flower buds.

The protein resides in the microsome membrane. The enzyme catalyses a (9Z,12Z)-octadecadienoyl-containing glycerolipid + AH2 + O2 = a (8E,10E,12Z)-octadecatrienoyl-containing glycerolipid + A + 2 H2O. The protein operates within lipid metabolism; polyunsaturated fatty acid biosynthesis. Functionally, fatty acid conjugase converting 18:2(9Z, 12Z) to calendic acid 18:3(8E, 10E, 12Z). Converts alpha-linolenic acid (18:3(9Z, 12Z, 15Z)) into 18:4(8E, 10E, 12Z, 15Z). Also has weak activity on the mono-unsaturates 16:1(9Z) and 18:1(9Z) producing two conjugated double bonds at delta(8) and delta(10) position. This chain is Fatty acid conjugase FAC2 A, found in Calendula officinalis (Pot marigold).